The chain runs to 418 residues: Histidine--tRNA ligase (418 aa).

This sequence belongs to the class-II aminoacyl-tRNA synthetase family. As to quaternary structure, homodimer.

The protein resides in the cytoplasm. It catalyses the reaction tRNA(His) + L-histidine + ATP = L-histidyl-tRNA(His) + AMP + diphosphate + H(+). In Thermoanaerobacter pseudethanolicus (strain ATCC 33223 / 39E) (Clostridium thermohydrosulfuricum), this protein is Histidine--tRNA ligase.